Consider the following 527-residue polypeptide: Peptide chain release factor 3 (527 aa).

The tr-type G domain occupies 9-278 (NKRRTFAIIS…GLTQWAPKPQ (270 aa)). Residues 18–25 (SHPDAGKT), 86–90 (DTPGH), and 140–143 (NKLD) contribute to the GTP site.

It belongs to the TRAFAC class translation factor GTPase superfamily. Classic translation factor GTPase family. PrfC subfamily.

The protein resides in the cytoplasm. Functionally, increases the formation of ribosomal termination complexes and stimulates activities of RF-1 and RF-2. It binds guanine nucleotides and has strong preference for UGA stop codons. It may interact directly with the ribosome. The stimulation of RF-1 and RF-2 is significantly reduced by GTP and GDP, but not by GMP. The sequence is that of Peptide chain release factor 3 from Haemophilus influenzae (strain PittEE).